The chain runs to 258 residues: D-beta-hydroxybutyrate dehydrogenase (258 aa).

6 to 30 (VITGSTSGIGLAIARTLAKAGANIV) is a binding site for NAD(+). S140 provides a ligand contact to substrate. Y153 serves as the catalytic Proton acceptor.

This sequence belongs to the short-chain dehydrogenases/reductases (SDR) family.

It carries out the reaction (R)-3-hydroxybutanoate + NAD(+) = acetoacetate + NADH + H(+). The polypeptide is D-beta-hydroxybutyrate dehydrogenase (bdhA) (Rhizobium meliloti (strain 1021) (Ensifer meliloti)).